The following is a 233-amino-acid chain: B-cell lymphoma/leukemia 10 (233 aa).

M1 carries the N-acetylmethionine modification. Residues 13–101 (LTEVKKDALE…QNFLIQKITD (89 aa)) form the CARD domain. Glycyl lysine isopeptide (Lys-Gly) (interchain with G-Cter in ubiquitin) cross-links involve residues K17, K31, and K63. Phosphoserine is present on S138. Residues 187–233 (FSSTTLPRPGDPGAPPLPPDLQLEEEGTCANSSEMFLPLRSRTVSRQ) form a disordered region. Residues 195–205 (PGDPGAPPLPP) are compositionally biased toward pro residues.

Homomultimer; homooligomerized following recruitment by CARD domain-containing proteins that form a nucleating helical template that recruits BCL10 via CARD-CARD interaction. Self-associates by CARD-CARD interaction and interacts with other CARD-proteins such as CARD9, CARD10, CARD11 and CARD14. Forms a complex with CARD14 and MALT1; resulting in the formation of a CBM (CARD14-BCL10-MALT1) complex. Forms a complex with CARD11 and MALT1; resulting in the formation of a CBM (CARD11-BCL10-MALT1) complex. Forms a complex with CARD9 and MALT1; resulting in the formation of a CBM (CARD9-BCL10-MALT1) complex. Found in a membrane raft complex, at least composed of BCL10, CARD11, DPP4 and IKBKB. Binds caspase-9 with its C-terminal domain. Interacts with TRAF2 and BIRC2/c-IAP2. Interacts with PELI2 and SOCS3; these interactions may be mutually exclusive. In terms of processing, phosphorylated. Phosphorylation results in dissociation from TRAF2 and binding to BIRC2/c-IAP2. Phosphorylated by IKBKB/IKKB. Ubiquitinated via both 'Lys-63'-linked and linear ('Met-1'-linked) polyubiquitin chains in response to T-cell receptor (TCR) activation. Ubiquitination is recognized by IKBKG/NEMO, the regulatory subunit of I-kappa-B kinase (IKK), and is required for TCR-induced NF-kappa-B activation. Linear ubiquitination at Lys-17, Lys-31 and Lys-63 is mediated by RNF31/HOIP; linear ubiquitination is recognized with much higher affinity than 'Lys-63'-linked ubiquitin by IKBKG/NEMO. CARD11 is required for linear ubiquitination by HOIP by promoting the targeting of BCL10 to RNF31/HOIP. Post-translationally, proteolytically cleaved by MALT1; required for T-cell activation. In terms of tissue distribution, ubiquitous.

The protein resides in the cytoplasm. The protein localises to the perinuclear region. It is found in the membrane raft. Its function is as follows. Plays a key role in both adaptive and innate immune signaling by bridging CARD domain-containing proteins to immune activation. Acts by channeling adaptive and innate immune signaling downstream of CARD domain-containing proteins CARD9, CARD11 and CARD14 to activate NF-kappa-B and MAP kinase p38 (MAPK11, MAPK12, MAPK13 and/or MAPK14) pathways which stimulate expression of genes encoding pro-inflammatory cytokines and chemokines. Recruited by activated CARD domain-containing proteins: homooligomerized CARD domain-containing proteins form a nucleating helical template that recruits BCL10 via CARD-CARD interaction, thereby promoting polymerization of BCL10, subsequent recruitment of MALT1 and formation of a CBM complex. This leads to activation of NF-kappa-B and MAP kinase p38 (MAPK11, MAPK12, MAPK13 and/or MAPK14) pathways which stimulate expression of genes encoding pro-inflammatory cytokines and chemokines. Activated by CARD9 downstream of C-type lectin receptors; CARD9-mediated signals are essential for antifungal immunity. Activated by CARD11 downstream of T-cell receptor (TCR) and B-cell receptor (BCR). Promotes apoptosis, pro-caspase-9 maturation and activation of NF-kappa-B via NIK and IKK. The chain is B-cell lymphoma/leukemia 10 from Homo sapiens (Human).